Consider the following 295-residue polypeptide: MNDSRYIGRFAPTPSGFLHFGSLVAALASWLDARAVNGRWLLRMEDTDPPREMPGARDAILQTLERYGLEWDGEVVFQSQRHEAYAAVVDRLFNMGLAYACTCSRKQLEGYDGIYPGFCRNAGHAREGAAIRLRVPELIYRFSDRVQGAFEQHLGREVGDFVIQRRDGLYAYQLAVVLDDAWQGVTDIVRGADLLDNTPRQLYLQELLGFSQPRYLHIPLIVQPDGHKLGKSYRSPPLEADQATPLLLRALRALGQQADPALIGASPAEVLAVARQQWQPDNIARQMTVPEADLR.

L-glutamate is bound by residues 9-13 (RFAPT) and Glu45. Positions 12–22 (PTPSGFLHFGS) match the 'HIGH' region motif. The Zn(2+) site is built by Cys101, Cys103, Tyr115, and Cys119. L-glutamate contacts are provided by Tyr172 and Arg190. The short motif at 228–232 (KLGKS) is the 'KMSKS' region element. An ATP-binding site is contributed by Lys231.

The protein belongs to the class-I aminoacyl-tRNA synthetase family. GluQ subfamily. Requires Zn(2+) as cofactor.

Its function is as follows. Catalyzes the tRNA-independent activation of glutamate in presence of ATP and the subsequent transfer of glutamate onto a tRNA(Asp). Glutamate is transferred on the 2-amino-5-(4,5-dihydroxy-2-cyclopenten-1-yl) moiety of the queuosine in the wobble position of the QUC anticodon. This chain is Glutamyl-Q tRNA(Asp) synthetase, found in Pseudomonas entomophila (strain L48).